A 189-amino-acid polypeptide reads, in one-letter code: Cancer/testis antigen family 45 member A10 (189 aa).

This sequence belongs to the CT45 family.

Its subcellular location is the nucleus. The protein is Cancer/testis antigen family 45 member A10 of Homo sapiens (Human).